Here is a 142-residue protein sequence, read N- to C-terminus: Neurofilament heavy polypeptide (142 aa).

The IF rod domain occupies 1-142; the sequence is MRGAVLRLGA…EAAKVNTDAM (142 aa). A coiled-coil region spans residues 26–74; the sequence is IAHVRQRLDDEARQRQEAEAAARALARFAQEAEAARVELQKKAQALQEE.

Belongs to the intermediate filament family. As to quaternary structure, forms heterodimers with NEFL; which can further hetero-oligomerize (in vitro). Forms heterodimers with INA (in vitro). There are a number of repeats of the tripeptide K-S-P, NFH is phosphorylated on a number of the serines in this motif. It is thought that phosphorylation of NFH results in the formation of interfilament cross bridges that are important in the maintenance of axonal caliber. In terms of processing, phosphorylation seems to play a major role in the functioning of the larger neurofilament polypeptides (NF-M and NF-H), the levels of phosphorylation being altered developmentally and coincidentally with a change in the neurofilament function. Post-translationally, phosphorylated in the head and rod regions by the PKC kinase PKN1, leading to the inhibition of polymerization.

Its subcellular location is the cytoplasm. It localises to the cytoskeleton. The protein localises to the cell projection. It is found in the axon. Neurofilaments usually contain three intermediate filament proteins: NEFL, NEFM, and NEFH which are involved in the maintenance of neuronal caliber. NEFH has an important function in mature axons that is not subserved by the two smaller NF proteins. May additionally cooperate with the neuronal intermediate filament proteins PRPH and INA to form neuronal filamentous networks. The polypeptide is Neurofilament heavy polypeptide (NEFH) (Sus scrofa (Pig)).